The chain runs to 617 residues: UvrABC system protein C (617 aa).

Residues 12 to 91 (EKPGVYLMKD…IKKYKPKYNV (80 aa)) form the GIY-YIG domain. Positions 203–238 (EWLVEKLKEEMQKAADELRFEEAARLRDQIFAIEKI) constitute a UVR domain.

Belongs to the UvrC family. As to quaternary structure, interacts with UvrB in an incision complex.

It is found in the cytoplasm. In terms of biological role, the UvrABC repair system catalyzes the recognition and processing of DNA lesions. UvrC both incises the 5' and 3' sides of the lesion. The N-terminal half is responsible for the 3' incision and the C-terminal half is responsible for the 5' incision. The polypeptide is UvrABC system protein C (Caldanaerobacter subterraneus subsp. tengcongensis (strain DSM 15242 / JCM 11007 / NBRC 100824 / MB4) (Thermoanaerobacter tengcongensis)).